Reading from the N-terminus, the 649-residue chain is ATP-dependent DNA helicase Q1 (649 aa).

The region spanning 100–275 (INVTMAGKEV…QKILCIEKCF (176 aa)) is the Helicase ATP-binding domain. 113 to 120 (MPTGGGKG) contacts ATP. The DEVH box motif lies at 219-222 (DEVH). Residues 300 to 451 (FIEDIVKLIN…EMVSYCQNIS (152 aa)) enclose the Helicase C-terminal domain. Positions 453, 471, 475, and 478 each coordinate Zn(2+). Residues Lys-514 and Lys-522 each carry the N6-acetyllysine modification. Phosphoserine is present on residues Ser-597 and Ser-602. Polar residues predominate over residues 597–608 (SFRVESSQTCHS). The segment at 597 to 649 (SFRVESSQTCHSEQGDKKMEEKNSGNFQKKAANMLQQSGSKNTGAKKRKIDDA) is disordered. Positions 609 to 619 (EQGDKKMEEKN) are enriched in basic and acidic residues. Residues 630-639 (MLQQSGSKNT) are compositionally biased toward polar residues. Phosphoserine is present on Ser-634. Residues 640 to 649 (GAKKRKIDDA) are compositionally biased toward basic residues.

Belongs to the helicase family. RecQ subfamily. May form homodimers or higher order oligomers. Interacts with EXO1. Interacts with MLH1. Interacts with PARP1. Requires Mg(2+) as cofactor. Mn(2+) serves as cofactor. The cofactor is Zn(2+).

It localises to the nucleus. The catalysed reaction is Couples ATP hydrolysis with the unwinding of duplex DNA by translocating in the 3'-5' direction.. It carries out the reaction ATP + H2O = ADP + phosphate + H(+). It catalyses the reaction dATP + H2O = dADP + phosphate + H(+). Its function is as follows. DNA helicase that plays a role in DNA damage repair and genome stability. Exhibits a magnesium- and ATP-dependent DNA-helicase activity that unwinds single- and double-stranded DNA in a 3'-5' direction. Plays a role in restoring regressed replication forks. Required to restart stalled replication forks induced by abortive topoisomerase 1 and 2 lesions. May play a role in the repair of DNA that is damaged by ultraviolet light or other mutagens. The polypeptide is ATP-dependent DNA helicase Q1 (RECQL) (Pongo abelii (Sumatran orangutan)).